Reading from the N-terminus, the 192-residue chain is Visinin (192 aa).

G2 is lipidated: N-myristoyl glycine. 4 consecutive EF-hand domains span residues 24–59 (TEEE…FFPN), 61–96 (EPQG…TSSG), 97–132 (KTHL…IFKM), and 146–181 (NSPQ…KNDA). Ca(2+)-binding residues include D74, N76, D78, T80, E85, D110, D112, N114, E116, E121, N164, K166, and E171.

It belongs to the recoverin family. Retinal cell specific protein.

Seems to be implicated in the pathway from retinal rod guanylate cyclase to rhodopsin. May be involved in the blocking of the phosphorylation of rhodopsin. In Gallus gallus (Chicken), this protein is Visinin.